Consider the following 381-residue polypeptide: tRNA pseudouridine synthase D (381 aa).

Catalysis depends on Asp-81, which acts as the Nucleophile. The TRUD domain occupies 160-335; the sequence is GMPNYFGSQR…TLGSRRFFWV (176 aa).

Belongs to the pseudouridine synthase TruD family.

It carries out the reaction uridine(13) in tRNA = pseudouridine(13) in tRNA. Functionally, responsible for synthesis of pseudouridine from uracil-13 in transfer RNAs. In Helicobacter pylori (strain J99 / ATCC 700824) (Campylobacter pylori J99), this protein is tRNA pseudouridine synthase D.